The sequence spans 399 residues: Insertion element IS116 uncharacterized 44.8 kDa protein (399 aa).

This sequence belongs to the transposase IS1111A/IS1328/IS1533 family.

This Streptomyces clavuligerus protein is Insertion element IS116 uncharacterized 44.8 kDa protein.